We begin with the raw amino-acid sequence, 164 residues long: MNPRRKSRLYLAMVVLIGISLTTTLVLYALRSNIDLFYTPGEILQGKGERHEKPAIGQRLRIGGMVMPGSVQRDAKTLEMSFQVYDARGAVTVTYTGILPDLFREGQGVVAQGVFAEGNTVHAKEVLAKHDEKYTPPEVEEAMKENHSRPAAAYRGTNTTGNAL.

At 1–8 the chain is on the cytoplasmic side; that stretch reads MNPRRKSR. Residues 9–29 traverse the membrane as a helical; Signal-anchor for type II membrane protein segment; it reads LYLAMVVLIGISLTTTLVLYA. The Periplasmic portion of the chain corresponds to 30 to 164; the sequence is LRSNIDLFYT…RGTNTTGNAL (135 aa). 2 residues coordinate heme: histidine 130 and tyrosine 134. The disordered stretch occupies residues 140 to 164; sequence EEAMKENHSRPAAAYRGTNTTGNAL.

The protein belongs to the CcmE/CycJ family.

It localises to the cell inner membrane. Its function is as follows. Heme chaperone required for the biogenesis of c-type cytochromes. Transiently binds heme delivered by CcmC and transfers the heme to apo-cytochromes in a process facilitated by CcmF and CcmH. This is Cytochrome c-type biogenesis protein CcmE from Yersinia pseudotuberculosis serotype O:3 (strain YPIII).